Here is a 365-residue protein sequence, read N- to C-terminus: Patr class I histocompatibility antigen, A-2 alpha chain (365 aa).

An N-terminal signal peptide occupies residues 1–24; that stretch reads MAVMPPRTLLLLLSGALALTQTWA. The interval 25-114 is alpha-1; the sequence is GSHSMRYFFT…LRGYYNQSED (90 aa). Over 25–308 the chain is Extracellular; the sequence is GSHSMRYFFT…EPSSQPTIPI (284 aa). N-linked (GlcNAc...) asparagine glycosylation is present at Asn-110. The segment at 115 to 206 is alpha-2; that stretch reads GSHTIQIMYG…ENGKETLQRT (92 aa). Cystine bridges form between Cys-125–Cys-188 and Cys-227–Cys-283. Positions 207 to 298 are alpha-3; the sequence is DPPKTHMTHH…GLPKPLTLRW (92 aa). Residues 209 to 295 form the Ig-like C1-type domain; that stretch reads PKTHMTHHPI…QHEGLPKPLT (87 aa). Residues 299 to 308 are connecting peptide; it reads EPSSQPTIPI. Residues 309–332 form a helical membrane-spanning segment; the sequence is VGIIAGLVLLGAVITGAVVAAVMW. Over 333 to 365 the chain is Cytoplasmic; that stretch reads RRKSSDRKGGSYTQAASSDSAQGSDVSLTACKV. Positions 339-360 are disordered; that stretch reads RKGGSYTQAASSDSAQGSDVSL. Ser-343 is subject to Phosphoserine. Tyr-344 is modified (phosphotyrosine). Low complexity predominate over residues 346-359; the sequence is QAASSDSAQGSDVS. Ser-349, Ser-350, Ser-352, Ser-356, and Ser-359 each carry phosphoserine.

This sequence belongs to the MHC class I family. In terms of assembly, heterodimer of an alpha chain and a beta chain (beta-2-microglobulin).

Its subcellular location is the membrane. In terms of biological role, involved in the presentation of foreign antigens to the immune system. In Pan troglodytes (Chimpanzee), this protein is Patr class I histocompatibility antigen, A-2 alpha chain.